The primary structure comprises 169 residues: Nicotinamide-nucleotide adenylyltransferase (169 aa).

It belongs to the archaeal NMN adenylyltransferase family.

Its subcellular location is the cytoplasm. It carries out the reaction beta-nicotinamide D-ribonucleotide + ATP + H(+) = diphosphate + NAD(+). It participates in cofactor biosynthesis; NAD(+) biosynthesis; NAD(+) from nicotinamide D-ribonucleotide: step 1/1. This is Nicotinamide-nucleotide adenylyltransferase from Picrophilus torridus (strain ATCC 700027 / DSM 9790 / JCM 10055 / NBRC 100828 / KAW 2/3).